Reading from the N-terminus, the 205-residue chain is MFDKIVIPRQFHHQHKWDKLLSKCPHPGVGFYIIGNKKALSARMRTDWEKVDLLPPVGRMAVDVMKVEISSADRAFMLMFVKACAVFASLHGLYLLNEVYLAASHQKADGKINTTWQLPFVLFLFCCIATTVWILESENGEGDGAPRPACPDFSTRGAETGNQGVQPGAVHGISQREKHVRGDSAQVDFAQAGKSRLEVQVILNF.

Residues 140–168 (GEGDGAPRPACPDFSTRGAETGNQGVQPG) are disordered.

In Homo sapiens (Human), this protein is Probable DNA-binding protein.